The chain runs to 338 residues: DNA-directed RNA polymerase subunit alpha (338 aa).

Residues 1–234 form an alpha N-terminal domain (alpha-NTD) region; it reads MIHKNWAELI…DQLSVFVNFD (234 aa). Residues 250–338 form an alpha C-terminal domain (alpha-CTD) region; the sequence is FDPRLLKKVD…DLAKRFDDQF (89 aa).

Belongs to the RNA polymerase alpha chain family. In terms of assembly, homodimer. The RNAP catalytic core consists of 2 alpha, 1 beta, 1 beta' and 1 omega subunit. When a sigma factor is associated with the core the holoenzyme is formed, which can initiate transcription.

It carries out the reaction RNA(n) + a ribonucleoside 5'-triphosphate = RNA(n+1) + diphosphate. DNA-dependent RNA polymerase catalyzes the transcription of DNA into RNA using the four ribonucleoside triphosphates as substrates. The sequence is that of DNA-directed RNA polymerase subunit alpha from Paracoccus denitrificans (strain Pd 1222).